Consider the following 506-residue polypeptide: Cobyric acid synthase (506 aa).

The 198-residue stretch at 251–448 (DITIAIVQLP…LHGLFDSDAF (198 aa)) folds into the GATase cobBQ-type domain. The active-site Nucleophile is C332. Residue H440 is part of the active site.

It belongs to the CobB/CobQ family. CobQ subfamily.

It participates in cofactor biosynthesis; adenosylcobalamin biosynthesis. Catalyzes amidations at positions B, D, E, and G on adenosylcobyrinic A,C-diamide. NH(2) groups are provided by glutamine, and one molecule of ATP is hydrogenolyzed for each amidation. The protein is Cobyric acid synthase of Salmonella arizonae (strain ATCC BAA-731 / CDC346-86 / RSK2980).